We begin with the raw amino-acid sequence, 122 residues long: MEASALTSSAVTSVAKVVRVASGSAVVLPLARIATVVIGGVVAMAAVPMVLSAMGFTAAGIASSSIAAKMMSAAAIANGGGVASGSLVATLQSLGATGLSGLTKFILGSIGSAIAAVIARFY.

A mitochondrion-targeting transit peptide spans 1–33 (MEASALTSSAVTSVAKVVRVASGSAVVLPLARI). A helical transmembrane segment spans residues 34–57 (ATVVIGGVVAMAAVPMVLSAMGFT). Lysine 69 is covalently cross-linked (Glycyl lysine isopeptide (Lys-Gly) (interchain with G-Cter in ubiquitin)). Transmembrane regions (helical) follow at residues 71 to 91 (MSAA…VATL) and 99 to 119 (LSGL…AVIA). The mediates interaction with SKP2 and hepatitis C virus non-structural protein NS5A stretch occupies residues 76–122 (IANGGGVASGSLVATLQSLGATGLSGLTKFILGSIGSAIAAVIARFY). The interval 103–112 (TKFILGSIGS) is required for hepatitis C virus non-structural protein NS5A degradation.

The protein belongs to the IFI6/IFI27 family. As to quaternary structure, homodimer. Interacts with hepatitis C virus/HCV non-structural protein NS5A; promotes the ubiquitin-mediated proteasomal degradation of NS5A. Interacts with SKP2; promotes the ubiquitin-mediated proteasomal degradation of NS5A. Interacts with NR4A1. May interact with BCL2. Post-translationally, ubiquitinated by TRIM21 via 'Lys-6'-linked ubiquitin chains leading to IFI27 mitochondrial migration.

The protein localises to the mitochondrion membrane. It localises to the nucleus inner membrane. It is found in the endoplasmic reticulum membrane. In terms of biological role, probable adapter protein involved in different biological processes. Part of the signaling pathways that lead to apoptosis. Involved in type-I interferon-induced apoptosis characterized by a rapid and robust release of cytochrome C from the mitochondria and activation of BAX and caspases 2, 3, 6, 8 and 9. Also functions in TNFSF10-induced apoptosis. May also have a function in the nucleus, where it may be involved in the interferon-induced negative regulation of the transcriptional activity of NR4A1, NR4A2 and NR4A3 through the enhancement of XPO1-mediated nuclear export of these nuclear receptors. May thereby play a role in the vascular response to injury. In the innate immune response, has an antiviral activity towards hepatitis C virus/HCV. May prevent the replication of the virus by recruiting both the hepatitis C virus non-structural protein 5A/NS5A and the ubiquitination machinery via SKP2, promoting the ubiquitin-mediated proteasomal degradation of NS5A. Also promotes virus-induced pyroptosis by activating CASP3 in the mitochondria after 'Lys-6'-linked ubiquitination by TRIM21. The polypeptide is Interferon alpha-inducible protein 27, mitochondrial (Homo sapiens (Human)).